Consider the following 209-residue polypeptide: Uracil phosphoribosyltransferase (209 aa).

5-phospho-alpha-D-ribose 1-diphosphate-binding positions include Arg79, Arg104, and 131–139; that span reads DPMLATGGS. Uracil contacts are provided by residues Ile194 and 199–201; that span reads GDA. Residue Asp200 coordinates 5-phospho-alpha-D-ribose 1-diphosphate.

It belongs to the UPRTase family. Mg(2+) serves as cofactor.

It catalyses the reaction UMP + diphosphate = 5-phospho-alpha-D-ribose 1-diphosphate + uracil. The protein operates within pyrimidine metabolism; UMP biosynthesis via salvage pathway; UMP from uracil: step 1/1. Allosterically activated by GTP. Functionally, catalyzes the conversion of uracil and 5-phospho-alpha-D-ribose 1-diphosphate (PRPP) to UMP and diphosphate. The chain is Uracil phosphoribosyltransferase from Geobacillus kaustophilus (strain HTA426).